The primary structure comprises 307 residues: 3-ketodihydrosphingosine reductase TSC10 (307 aa).

Leu-11 lines the NADP(+) pocket. NADPH-binding residues include Gly-14, Ser-16, and Gly-18. Positions 14 to 18 match the GXSXG motif; the sequence is GGSQG. Leu-19 lines the NADP(+) pocket. Residues Arg-40, Lys-44, and Leu-74 each coordinate NADPH. Ser-147 serves as the catalytic Proton donor. The NADP(+) site is built by Tyr-161, Lys-165, and Ser-194. Tyr-161 functions as the Proton acceptor in the catalytic mechanism. Lys-165 (lowers pKa of active site Tyr) is an active-site residue. A helical membrane pass occupies residues 261–281; that stretch reads YFLWPLGWLLGALVNLLVVPI.

This sequence belongs to the short-chain dehydrogenases/reductases (SDR) family.

It is found in the endoplasmic reticulum membrane. The catalysed reaction is sphinganine + NADP(+) = 3-oxosphinganine + NADPH + H(+). It participates in lipid metabolism; sphingolipid metabolism. Catalyzes the reduction of 3'-oxosphinganine (3-ketodihydrosphingosine/KDS) to sphinganine (dihydrosphingosine/DHS), the second step of de novo sphingolipid biosynthesis. The sequence is that of 3-ketodihydrosphingosine reductase TSC10 (TSC10) from Eremothecium gossypii (strain ATCC 10895 / CBS 109.51 / FGSC 9923 / NRRL Y-1056) (Yeast).